Reading from the N-terminus, the 222-residue chain is MLDYRQKIDALITKIEKARTAYSRHHIVKIVAVSKNASPEAIQHYYNCSQRAFGENKVQDLKTKMHSLEHLPLEWHMIGSLQENKINALLSLKPALLHSLDSLKLALKIEKRCEILGVNLNALLQVNSAYEESKSGVVPEEALEIYSQISETCKHLKLKGLMCIGAHTDDEKEIEKSFITTKKLFDQIKNASVLSMGMSDDFELAIACGANLLRIGSFLFKE.

Lys35 carries the post-translational modification N6-(pyridoxal phosphate)lysine.

The protein belongs to the pyridoxal phosphate-binding protein YggS/PROSC family.

Pyridoxal 5'-phosphate (PLP)-binding protein, which is involved in PLP homeostasis. This is Pyridoxal phosphate homeostasis protein from Helicobacter pylori (strain ATCC 700392 / 26695) (Campylobacter pylori).